Reading from the N-terminus, the 217-residue chain is MNATTAPLPYSAARLHELAQLLIGNIRELAQAGWTPATSSNFSHRLDEQHAAITVSGRDKGRLVEEDIMVVDFDGQPVGRPLRPSAETLLHTQLYRRFPEIGCVLHTHSPVQTIASRLYAGSGVIRLEGYELLKAFEGNTTHETAVDVPVFANTQDMQVLAAQVEALLDKQSMWGYLIEGHGLYAWGRNMAEARRHLEAFEFLLHCELELLKLRSPR.

Zn(2+) is bound by residues H106 and H108.

The protein belongs to the aldolase class II family. MtnB subfamily. Zn(2+) is required as a cofactor.

The catalysed reaction is 5-(methylsulfanyl)-D-ribulose 1-phosphate = 5-methylsulfanyl-2,3-dioxopentyl phosphate + H2O. Its pathway is amino-acid biosynthesis; L-methionine biosynthesis via salvage pathway; L-methionine from S-methyl-5-thio-alpha-D-ribose 1-phosphate: step 2/6. Its function is as follows. Catalyzes the dehydration of methylthioribulose-1-phosphate (MTRu-1-P) into 2,3-diketo-5-methylthiopentyl-1-phosphate (DK-MTP-1-P). This is Methylthioribulose-1-phosphate dehydratase from Xanthomonas campestris pv. campestris (strain 8004).